The primary structure comprises 959 residues: Glycine dehydrogenase (decarboxylating) (959 aa).

An N6-(pyridoxal phosphate)lysine modification is found at Lys-708.

It belongs to the GcvP family. In terms of assembly, the glycine cleavage system is composed of four proteins: P, T, L and H. It depends on pyridoxal 5'-phosphate as a cofactor.

It carries out the reaction N(6)-[(R)-lipoyl]-L-lysyl-[glycine-cleavage complex H protein] + glycine + H(+) = N(6)-[(R)-S(8)-aminomethyldihydrolipoyl]-L-lysyl-[glycine-cleavage complex H protein] + CO2. Functionally, the glycine cleavage system catalyzes the degradation of glycine. The P protein binds the alpha-amino group of glycine through its pyridoxal phosphate cofactor; CO(2) is released and the remaining methylamine moiety is then transferred to the lipoamide cofactor of the H protein. This chain is Glycine dehydrogenase (decarboxylating), found in Yersinia enterocolitica serotype O:8 / biotype 1B (strain NCTC 13174 / 8081).